The sequence spans 439 residues: CBL-interacting serine/threonine-protein kinase 26 (439 aa).

A Protein kinase domain is found at 13–268 (YEVGKTLGQG…IPEVLGDAWF (256 aa)). Residues 19-27 (LGQGTFAKV) and Lys42 each bind ATP. Asp136 functions as the Proton acceptor in the catalytic mechanism. Positions 154 to 183 (DFGLSALSRQVRGDGLLHTACGTPNYAAPE) are activation loop. Residue Ser158 is modified to Phosphoserine. Residue Thr172 is modified to Phosphothreonine. Positions 306-330 (EQPTSMNAFELISMSRALDLGNLFE) constitute an NAF domain. Residues 336 to 365 (KRETRFAAKGAANDLVQKIEEASKPLGFDI) form a PPI region.

The protein belongs to the protein kinase superfamily. CAMK Ser/Thr protein kinase family. SNF1 subfamily. As to quaternary structure, interacts with RBOHF (via N-terminus). The cofactor is Mn(2+).

It localises to the cell membrane. The enzyme catalyses L-seryl-[protein] + ATP = O-phospho-L-seryl-[protein] + ADP + H(+). It catalyses the reaction L-threonyl-[protein] + ATP = O-phospho-L-threonyl-[protein] + ADP + H(+). CIPK serine-threonine protein kinases interact with CBL proteins. Binding of a CBL protein to the regulatory NAF domain of CIPK protein lead to the activation of the kinase in a calcium-dependent manner. Involved in the calcium-dependent regulation of reactive oxygen species production by the NADPH oxidase RBOHF. In Arabidopsis thaliana (Mouse-ear cress), this protein is CBL-interacting serine/threonine-protein kinase 26 (CIPK26).